The following is an 822-amino-acid chain: uncharacterized protein (822 aa).

Topologically, residues 1–13 (MCHNSVRSGNKAG) are cytoplasmic. The helical transmembrane segment at 14-34 (FLGIKFGSALLSIATGAIAIA) threads the bilayer. At 35–44 (LLCKFHDHEA) the chain is on the extracellular side. Residues 45–65 (VLIVIVCSTLLYGIPSLISFI) form a helical membrane-spanning segment. Over 66-76 (TETVFAPSKFH) the chain is Cytoplasmic. Residues 77-97 (IGYFYNVLNFALPLITMGCTV) form a helical membrane-spanning segment. Over 98–120 (DYFHNTLRSPISVQSESHRVYIT) the chain is Extracellular. A helical membrane pass occupies residues 121-141 (TLDSLLIFTLFINGIQLGFFL). Residues 142–822 (KDGNANNFGS…PVEELVSPSK (681 aa)) lie on the Cytoplasmic side of the membrane. The interval 271 to 290 (RNTQQATKVPTEKKSNHRSS) is disordered. Ser-690 carries the phosphoserine modification. A compositionally biased stretch (polar residues) spans 698 to 712 (TLQSSHSPTKSTSGN). Disordered stretches follow at residues 698 to 728 (TLQS…STVN) and 751 to 783 (NGEE…GYPE). A compositionally biased stretch (low complexity) spans 761-776 (QSIQSSSSGSEQESAG).

It localises to the membrane. This is an uncharacterized protein from Saccharomyces cerevisiae (strain ATCC 204508 / S288c) (Baker's yeast).